Consider the following 253-residue polypeptide: MRAGVFDSGVGGLTVVKSLLEHGLFDEIIYFGDTARVPYGPKDKNTIIRYSLEAQEFFKNFDVDILITACNSVSAHAIEELRSNASFPVIGVIEPGVLALQNRGLDPKSQILVIGTQATIGSGKYQKLLREHGYNNILAKATPLFVPIVEEEIFEGPVLEATLQHYFDSLHPDAIILGCTHFPLIQDAIADYFNNEAVLIHSGEAIVEHLQKELGIKARKKTPSLKLFASENPEKLKKIAAHWLRDAFKTNEL.

Substrate-binding positions include 7 to 8 (DS) and 39 to 40 (YG). Catalysis depends on cysteine 70, which acts as the Proton donor/acceptor. 71–72 (NS) contributes to the substrate binding site. Cysteine 179 serves as the catalytic Proton donor/acceptor. Residue 180–181 (TH) coordinates substrate.

Belongs to the aspartate/glutamate racemases family.

It catalyses the reaction L-glutamate = D-glutamate. The protein operates within cell wall biogenesis; peptidoglycan biosynthesis. Functionally, provides the (R)-glutamate required for cell wall biosynthesis. The protein is Glutamate racemase of Nitratiruptor sp. (strain SB155-2).